A 276-amino-acid polypeptide reads, in one-letter code: MKSAIIGYMAVAVAAASCQFTVDSKNYDLSAISGPKSVEYTIETPPSKRKMEFVLDPCASLKQDKKKPADEQCPDNTIVCGLGYILLPKEKDFVLSEVMPFGNGPAPQYQPLKTGPEGTEGLSTSYGNPWGSEKLDIDVNYICSDKEEGPKLENVGLGLNNYYEINWKTPAACINDGSKPKQPVKEPGKTPNDGDDASNGNPSWGWFTWLFIIIVLGVAVYIIGNAWINYDRYGNAGVDLLPHADSLRDVPYLIRDLIAKVVGTFTGSSRTGYSAV.

An N-terminal signal peptide occupies residues 1 to 15; the sequence is MKSAIIGYMAVAVAA. Residues 16–175 form the MRH domain; sequence ASCQFTVDSK…NWKTPAACIN (160 aa). Residues 16–203 lie on the Lumenal side of the membrane; the sequence is ASCQFTVDSK…GDDASNGNPS (188 aa). Disulfide bonds link Cys-18-Cys-58, Cys-73-Cys-80, and Cys-143-Cys-173. The segment at 174 to 198 is disordered; the sequence is INDGSKPKQPVKEPGKTPNDGDDAS. Residues 204 to 224 traverse the membrane as a helical segment; that stretch reads WGWFTWLFIIIVLGVAVYIIG. Residues 225–276 lie on the Cytoplasmic side of the membrane; it reads NAWINYDRYGNAGVDLLPHADSLRDVPYLIRDLIAKVVGTFTGSSRTGYSAV.

The protein belongs to the ATG27 family.

It localises to the cytoplasmic vesicle membrane. The protein resides in the golgi apparatus membrane. It is found in the mitochondrion membrane. The protein localises to the preautophagosomal structure membrane. In terms of biological role, effector of VPS34 phosphatidylinositol 3-phosphate kinase signaling. Regulates the cytoplasm to vacuole transport (Cvt) vesicle formation. Plays a role in ATG protein retrieval from the pre-autophagosomal structure (PAS) and is especially required for autophagy-dependent cycling of ATG9. The chain is Autophagy-related protein 27 (ATG27) from Yarrowia lipolytica (strain CLIB 122 / E 150) (Yeast).